We begin with the raw amino-acid sequence, 106 residues long: Large ribosomal subunit protein bL21 (106 aa).

The protein belongs to the bacterial ribosomal protein bL21 family. As to quaternary structure, part of the 50S ribosomal subunit. Contacts protein L20.

Its function is as follows. This protein binds to 23S rRNA in the presence of protein L20. The polypeptide is Large ribosomal subunit protein bL21 (Xanthomonas euvesicatoria pv. vesicatoria (strain 85-10) (Xanthomonas campestris pv. vesicatoria)).